Consider the following 487-residue polypeptide: MKSPLKLYFLPYISPGHMIPLSEMARLFANQGHHVTIITTTSNATLLQKYTTATLSLHLIPLPTKEAGLPDGLENFISVNDLETAGKLYYALSLLQPVIEEFITSNPPDCIVSDMFYPWTADLASQLQVPRMVFHAACIFAMCMKESMRGPDAPHLKVSSDYELFEVKGLPDPVFMTRAQLPDYVRTPNGYTQLMEMWREAEKKSYGVMVNNFYELDPAYTEHYSKIMGHKVWNIGPAAQILHRGSGDKIERVHKAVVGENQCLSWLDTKEPNSVFYVCFGSAIRFPDDQLYEIASALESSGAQFIWAVLGKDSDNSDSNSDSEWLPAGFEEKMKETGRGMIIRGWAPQVLILDHPSVGGFMTHCGWNSTIEGVSAGVGMVTWPLYAEQFYNEKLITQVLKIGVEAGVEEWNLWVDVGRKLVKREKIEAAIRAVMGEAGVEMRRKAKELSVKAKKAVQDGGSSHRNLMALIEDLQRIRDDKMSKVAN.

His17 (proton acceptor) is an active-site residue. Asp114 serves as the catalytic Charge relay. Ser282, Trp346, Ala347, His364, Asn368, Ser369, Glu372, and Tyr386 together coordinate UDP.

Belongs to the UDP-glycosyltransferase family. In terms of tissue distribution, mainly expressed in flowers and flower buds and, to a lesser extent, in leaves, stems and roots.

The protein operates within secondary metabolite biosynthesis; terpenoid biosynthesis. Its function is as follows. Component of the oleanane-type triterpene saponins (e.g. saponarioside A and saponarioside B) biosynthetic pathway, leading to the production of natural products with detergent properties used as traditional sources of soap. A glycosyltransferase that mediates the conversion of QA-di to QA-tri via the elongation of the C-3 sugar chain with a D-xylose. In Saponaria officinalis (Common soapwort), this protein is UDP-glucosyl transferase 73CC6.